Consider the following 62-residue polypeptide: Ferredoxin-3 (62 aa).

2 consecutive 4Fe-4S ferredoxin-type domains span residues serine 2–serine 28 and aspartate 29–alanine 62. [4Fe-4S] cluster contacts are provided by cysteine 9, cysteine 12, cysteine 15, cysteine 19, cysteine 38, cysteine 41, cysteine 50, and cysteine 54.

[4Fe-4S] cluster serves as cofactor.

In terms of biological role, ferredoxins are iron-sulfur proteins that transfer electrons in a wide variety of metabolic reactions. This is Ferredoxin-3 from Chlorobaculum tepidum (strain ATCC 49652 / DSM 12025 / NBRC 103806 / TLS) (Chlorobium tepidum).